The following is a 1032-amino-acid chain: Protein transport protein Sec24D (1032 aa).

Residues 1-260 (MSQQGYVATP…GPPQPQKKLD (260 aa)) are disordered. Over residues 102–133 (PSAQSSYPGPISTSSVTQLGSQLSAMQINSYG) the composition is skewed to polar residues. A compositionally biased stretch (pro residues) spans 198–212 (GPPPPNAQYQPPPLP). Serine 266 carries the phosphoserine modification. Cysteine 363, cysteine 366, cysteine 385, and cysteine 388 together coordinate Zn(2+). Residues 363-388 (CNRCKAYMCPFMQFIEGGRRYQCGFC) form a zinc finger-like region. Residues 901 to 974 (MLPAAVRCSE…PYSQQLRMIM (74 aa)) form a Gelsolin-like repeat.

It belongs to the SEC23/SEC24 family. SEC24 subfamily. As to quaternary structure, COPII is composed of at least five proteins: the Sec23/24 complex, the Sec13/31 complex and Sar1. Interacts with TMED2 and TMED10. Interacts with CNIH4. Interacts with GOSR2 (via IxM motif) and STX5 (via IxM motif); recruits GOSR2 and STX5 into COPII-coated vesicles. Interacts with KCNA3; this interaction is reduced in the presence of KCNE4. Ubiquitously expressed, with higher amounts in placenta, pancreas, heart and liver.

The protein resides in the cytoplasmic vesicle. It localises to the COPII-coated vesicle membrane. The protein localises to the endoplasmic reticulum membrane. It is found in the cytoplasm. Its subcellular location is the cytosol. Component of the coat protein complex II (COPII) which promotes the formation of transport vesicles from the endoplasmic reticulum (ER). The coat has two main functions, the physical deformation of the endoplasmic reticulum membrane into vesicles and the selection of cargo molecules for their transport to the Golgi complex. Plays a central role in cargo selection within the COPII complex and together with SEC24C may have a different specificity compared to SEC24A and SEC24B. May more specifically package GPI-anchored proteins through the cargo receptor TMED10. May also be specific for IxM motif-containing cargos like the SNAREs GOSR2 and STX5. This Homo sapiens (Human) protein is Protein transport protein Sec24D.